The following is a 453-amino-acid chain: uncharacterized protein (453 aa).

Positions 1 to 23 (MFLLQRFFIYGLFLACFYTTVFG) are cleaved as a signal peptide. The Lumenal portion of the chain corresponds to 24–137 (EKHFEAEEYR…EKQFSYSSGT (114 aa)). A helical membrane pass occupies residues 138–158 (NGILATFLTAIPPNIFILLVP). Over 159-165 (KSFDTSM) the chain is Cytoplasmic. A helical transmembrane segment spans residues 166 to 186 (LNLFVAVSAGSLLGDVFLQLL). Residues 187–194 (PTVYSTNG) lie on the Lumenal side of the membrane. A helical transmembrane segment spans residues 195-215 (GDFPASSVYSILIGALVFFLM). Residues 216–358 (DKGIRILIHE…LRNGYTKSQV (143 aa)) lie on the Cytoplasmic side of the membrane. Residues 229 to 238 (SLSKPKKDGE) show a composition bias toward basic and acidic residues. The tract at residues 229–278 (SLSKPKKDGEETSSVNKPSASSTQTDVKGVEGLRKRNVKDDQNSKGHEPD) is disordered. Residues 240-254 (TSSVNKPSASSTQTD) are compositionally biased toward polar residues. A compositionally biased stretch (basic and acidic residues) spans 256 to 278 (KGVEGLRKRNVKDDQNSKGHEPD). Residues 359–379 (LVLQMITMVTGLLGAIVATYI) traverse the membrane as a helical segment. The Lumenal segment spans residues 380–399 (YTASSSSSPYGSFLLQLEDK). A helical membrane pass occupies residues 400–420 (LLPFTAGGFLYIAYLGVFPEL). Residues 421–432 (LEINLSKGKLGN) lie on the Cytoplasmic side of the membrane. Residues 433 to 453 (MIYTALYMMFIVGGFSFLYYV) traverse the membrane as a helical segment.

It belongs to the ZIP transporter (TC 2.A.5) family. KE4/Catsup subfamily.

The protein localises to the endoplasmic reticulum membrane. This is an uncharacterized protein from Schizosaccharomyces pombe (strain 972 / ATCC 24843) (Fission yeast).